A 264-amino-acid chain; its full sequence is O-methyltransferase resE (264 aa).

S-adenosyl-L-methionine-binding residues include Q97 and H142.

It belongs to the methyltransferase superfamily.

The catalysed reaction is desmethylrestrictinol + S-adenosyl-L-methionine = restrictinol + S-adenosyl-L-homocysteine + H(+). The protein operates within antifungal biosynthesis. In terms of biological role, O-methyltransferase; part of the gene cluster that mediates the biosynthesis of the tetrahydropyranyl antifungal agent restricticin that acts as an inhibitor of CYP51 and blocks the ergosterol biosynthesis. Within the pathway, resE uses S-adenosylmethionine to methylate position C4 of desmethylrestrictinol to produce restrictinol. The highly reducing polyketide synthase resH, the short chain dehydrogenase resG, the cyclase resF, the FAD-dependent monooxygenase resA and the enoylreductase resD are required to generate the first stable intermediate desmethylrestrictinol. ResH with resD biosynthesize the first polyketide chain intermediate that is reduced by resG, followed by epoxidation by resA before 6-endo cyclization via epoxide opening by resF leads to desmethylrestrictinol. The methyltransferase resE then catalyzes the C4 O-methylation of desmethylrestrictinol to produce restrictinol, and the nonribosomal peptide synthetase resC catalyzes the C3 esterification of restrictinol with glycine that leads to restricticin. This Aspergillus sclerotiorum protein is O-methyltransferase resE.